The following is a 341-amino-acid chain: Bis(monoacylglycero)phosphate synthase CLN5 (341 aa).

The Cytoplasmic segment spans residues 1–13; the sequence is MLRGGPCGAHWRP. A helical; Signal-anchor for type II membrane protein transmembrane segment spans residues 14–30; that stretch reads ALALALLGLATILGASP. Over 31-341 the chain is Lumenal; sequence TSGQRWPVPY…PTRHTTFTDL (311 aa). Cystine bridges form between cysteine 53/cysteine 142 and cysteine 60/cysteine 148. Histidine 100 acts as the Proton acceptor in catalysis. Asparagine 113, asparagine 126, asparagine 161, and asparagine 186 each carry an N-linked (GlcNAc...) asparagine glycan. The Nucleophile; Acyl-thioester intermediate role is filled by cysteine 214. N-linked (GlcNAc...) asparagine glycosylation is found at asparagine 238, asparagine 254, and asparagine 264. The tract at residues 287-326 is membrane-anchoring; it reads FLMNFLKIFDTVIIHRQFYLFYNFEYWFLPMKPPFVKITY.

Belongs to the CLN5 family. In terms of assembly, multimer. Interacts with PPT1, TPP1, CLN3, CLN6, CLN8, ATP5F1A and ATP5F1B. Interacts with SORT1, RAB5A and RAB7A. N-glycosylated with both high mannose and complex type sugars. Glycosylation is important for proper folding and trafficking to the lysosomes. In terms of processing, the type II membrane signal anchor is proteolytically cleaved to produce a mature form that is transported to the lysosomes (Bis(monoacylglycero)phosphate synthase CLN5, secreted form). Post-translationally, can undergo proteolytic cleavage at the C-terminus, probably by a cysteine protease and may involve the removal of approximately 10-15 residues from the C-terminal end. In terms of tissue distribution, heart, kidney, liver, spleen, muscle and rectum (at protein level).

Its subcellular location is the lysosome. It localises to the membrane. The enzyme catalyses S-hexadecanoyl-L-cysteinyl-[protein] + H2O = L-cysteinyl-[protein] + hexadecanoate + H(+). The catalysed reaction is 2 1-acyl-sn-glycero-3-phospho-(1'-sn-glycerol) = 1-acyl-sn-glycero-3-phospho-(3'-acyl-sn-1'-glycerol) + sn-glycero-3-phospho-(1'-sn-glycerol). It carries out the reaction 2 1-(9Z-octadecenoyl)-sn-glycero-3-phospho-(1'-sn-glycerol) = 1-(9Z-octadecenoyl)-sn-glycero-3-phospho-(3'-(9Z-octadecenoyl)-1'-sn-glycerol) + sn-glycero-3-phospho-(1'-sn-glycerol). It catalyses the reaction 2 1-octadecanoyl-sn-glycero-3-phospho-(1'-sn-glycerol) = 1-octadecanoyl-sn-glycero-3-phospho-(3'-octadecanoyl-1'-sn-glycerol) + sn-glycero-3-phospho-(1'-sn-glycerol). The enzyme catalyses 2 1-hexadecanoyl-sn-glycero-3-phospho-(1'-sn-glycerol) = 1-hexadecanoyl-sn-glycero-3-phospho-(3'-hexadecanoyl-1'-sn-glycerol) + sn-glycero-3-phospho-(1'-sn-glycerol). The catalysed reaction is 2 1-tetradecanoyl-sn-glycero-3-phospho-(1'-sn-glycerol) = 1-tetradecanoyl-sn-glycero-3-phospho-(3'-tetradecanoyl-1'-sn-glycerol) + sn-glycero-3-phospho-(1'-sn-glycerol). Catalyzes the synthesis of bis(monoacylglycero)phosphate (BMP) via transacylation of 2 molecules of lysophosphatidylglycerol (LPG). BMP also known as lysobisphosphatidic acid plays a key role in the formation of intraluminal vesicles and in maintaining intracellular cholesterol homeostasis. Can use only LPG as the exclusive lysophospholipid acyl donor for base exchange and displays BMP synthase activity towards various LPGs (LPG 14:0, LPG 16:0, LPG 18:0, LPG 18:1) with a higher preference for longer chain lengths. Plays a role in influencing the retrograde trafficking of lysosomal sorting receptors SORT1 and IGF2R from the endosomes to the trans-Golgi network by controlling the recruitment of retromer complex to the endosomal membrane. Regulates the localization and activation of RAB7A which is required to recruit the retromer complex to the endosomal membrane. In terms of biological role, exhibits palmitoyl protein thioesterase (S-depalmitoylation) activity in vitro and most likely plays a role in protein S-depalmitoylation. In Mus musculus (Mouse), this protein is Bis(monoacylglycero)phosphate synthase CLN5 (Cln5).